Here is a 142-residue protein sequence, read N- to C-terminus: Group IIE secretory phospholipase A2 (142 aa).

The first 19 residues, 1–19 (MKPPIALACLCLLVPLAGG), serve as a signal peptide directing secretion. Ca(2+) contacts are provided by Asp-41, Gly-43, Tyr-45, Gly-47, and Gly-49. Cystine bridges form between Cys-44-Cys-135, Cys-46-Cys-62, Cys-61-Cys-115, Cys-67-Cys-142, Cys-68-Cys-108, Cys-77-Cys-101, and Cys-95-Cys-106. The active site involves His-65. A Ca(2+)-binding site is contributed by Asp-66. Residue Asp-109 is part of the active site. 2 residues coordinate Ca(2+): Tyr-130 and Asn-132.

It belongs to the phospholipase A2 family. Ca(2+) is required as a cofactor. Highly expressed in skin and uterus, and at lower levels in various other tissues. Expressed in hair follicles, specifically localized in companion cells of the outer root sheath and cuticular cells of the inner root sheath in hair follicles during anagen. Expressed in white and brown adipose tissue.

The protein localises to the secreted. Its subcellular location is the cytoplasm. It catalyses the reaction a 1,2-diacyl-sn-glycero-3-phosphoethanolamine + H2O = a 1-acyl-sn-glycero-3-phosphoethanolamine + a fatty acid + H(+). It carries out the reaction 1-hexadecanoyl-2-(9Z-octadecenoyl)-sn-glycero-3-phosphoethanolamine + H2O = 1-hexadecanoyl-sn-glycero-3-phosphoethanolamine + (9Z)-octadecenoate + H(+). The catalysed reaction is 1-hexadecanoyl-2-(9Z,12Z-octadecadienoyl)-sn-glycero-3-phosphoethanolamine + H2O = 1-hexadecanoyl-sn-glycero-3-phosphoethanolamine + (9Z,12Z)-octadecadienoate + H(+). The enzyme catalyses 1-hexadecanoyl-2-(5Z,8Z,11Z,14Z-eicosatetraenoyl)-sn-glycero-3-phosphoethanolamine + H2O = 1-hexadecanoyl-sn-glycero-3-phosphoethanolamine + (5Z,8Z,11Z,14Z)-eicosatetraenoate + H(+). It catalyses the reaction 1,2-dihexadecanoyl-sn-glycero-3-phospho-(1'-sn-glycerol) + H2O = 1-hexadecanoyl-sn-glycero-3-phospho-(1'-sn-glycerol) + hexadecanoate + H(+). It carries out the reaction 1-hexadecanoyl-2-(9Z-octadecenoyl)-sn-glycero-3-phosphoglycerol + H2O = 1-hexadecanoyl-sn-glycero-3-phosphoglycerol + (9Z)-octadecenoate + H(+). The catalysed reaction is a 1,2-diacyl-sn-glycero-3-phosphocholine + H2O = a 1-acyl-sn-glycero-3-phosphocholine + a fatty acid + H(+). The enzyme catalyses 1,2-dihexadecanoyl-sn-glycero-3-phosphocholine + H2O = 1-hexadecanoyl-sn-glycero-3-phosphocholine + hexadecanoate + H(+). It catalyses the reaction 1-hexadecanoyl-2-(9Z-octadecenoyl)-sn-glycero-3-phosphocholine + H2O = 1-hexadecanoyl-sn-glycero-3-phosphocholine + (9Z)-octadecenoate + H(+). It carries out the reaction 1-hexadecanoyl-2-(9Z,12Z-octadecadienoyl)-sn-glycero-3-phosphocholine + H2O = (9Z,12Z)-octadecadienoate + 1-hexadecanoyl-sn-glycero-3-phosphocholine + H(+). The catalysed reaction is 1-hexadecanoyl-2-(4Z,7Z,10Z,13Z,16Z,19Z-docosahexaenoyl)-sn-glycero-3-phosphocholine + H2O = (4Z,7Z,10Z,13Z,16Z,19Z)-docosahexaenoate + 1-hexadecanoyl-sn-glycero-3-phosphocholine + H(+). Secretory calcium-dependent phospholipase A2 that primarily targets extracellular phospholipids. Hydrolyzes the ester bond of the fatty acyl group attached at sn-2 position of phospholipids (phospholipase A2 activity), releasing various unsaturated fatty acids including oleoate, linoleoate, arachidonate, docosahexaenoate and lysophosphatidylethanolamines in preference to lysophosphatidylcholines. In response to high-fat diet, hydrolyzes minor lipoprotein phospholipids including phosphatidylserines, phosphatidylinositols and phosphatidylglycerols, altering lipoprotein composition and fat storage in adipose tissue and liver. May act in an autocrine and paracrine manner. Contributes to lipid remodeling of cellular membranes and generation of lipid mediators involved in pathogen clearance. Cleaves sn-2 fatty acyl chains of phosphatidylglycerols and phosphatidylethanolamines, which are major components of membrane phospholipids in bacteria. Acts as a hair follicle phospholipase A2. Selectively releases lysophosphatidylethanolamines (LPE) and various unsaturated fatty acids in skin to regulate hair follicle homeostasis. May regulate the inflammatory response by releasing arachidonate, a precursor of prostaglandins and leukotrienes. Upon allergen exposure, may participate in allergic inflammatory response by enhancing leukotriene C4 synthesis and degranulation in mast cells. The protein is Group IIE secretory phospholipase A2 (Pla2g2e) of Mus musculus (Mouse).